Reading from the N-terminus, the 212-residue chain is uncharacterized protein (212 aa).

The S-adenosyl-L-methionine site is built by Gly-53, Glu-74, and Asp-97.

This sequence belongs to the methyltransferase superfamily. YrrT family.

Its function is as follows. Could be a S-adenosyl-L-methionine-dependent methyltransferase. This is an uncharacterized protein from Bacillus cereus (strain ATCC 14579 / DSM 31 / CCUG 7414 / JCM 2152 / NBRC 15305 / NCIMB 9373 / NCTC 2599 / NRRL B-3711).